The chain runs to 121 residues: Piercer of microtubule wall 2 protein (121 aa).

Residues 1–10 (MTDRNRDKKS) are compositionally biased toward basic and acidic residues. The interval 1–29 (MTDRNRDKKSTSPSNSDTEMKSEQLPPCV) is disordered.

This sequence belongs to the PIERCE2 family. In terms of assembly, microtubule inner protein component of sperm flagellar doublet microtubules. Interacts with CFAP53, ODAD1 and ODAD3; the interactions link the outer dynein arms docking complex (ODA-DC) to the internal microtubule inner proteins (MIP) in cilium axoneme. In terms of tissue distribution, expressed in airway epithelial cells.

The protein localises to the cytoplasm. It is found in the cytoskeleton. The protein resides in the cilium axoneme. Its subcellular location is the flagellum axoneme. Microtubule inner protein involved in the attachment of outer dynein arms (ODAs) to dynein-decorated doublet microtubules (DMTs) in cilia axoneme, which is required for motile cilia beating. In Homo sapiens (Human), this protein is Piercer of microtubule wall 2 protein.